The sequence spans 226 residues: Phosphoglycolate phosphatase (226 aa).

Residue Asp9 is the Nucleophile of the active site. Residues Asp9 and Asp11 each coordinate Mg(2+). Lys150 contacts substrate. 2 residues coordinate Mg(2+): Asp173 and Asp177.

It belongs to the archaeal SPP-like hydrolase family. Mg(2+) serves as cofactor.

It catalyses the reaction 2-phosphoglycolate + H2O = glycolate + phosphate. Its function is as follows. Catalyzes the dephosphorylation of 2-phosphoglycolate. This is Phosphoglycolate phosphatase from Methanosarcina mazei (strain ATCC BAA-159 / DSM 3647 / Goe1 / Go1 / JCM 11833 / OCM 88) (Methanosarcina frisia).